Consider the following 312-residue polypeptide: Olfactory receptor 2M7 (312 aa).

Residues 1–25 lie on the Extracellular side of the membrane; the sequence is MAWENQTFNSDFLLLGIFNHSPTHT. The N-linked (GlcNAc...) asparagine glycan is linked to asparagine 5. The helical transmembrane segment at 26–49 threads the bilayer; the sequence is FLFFLVLAIFSVAFMGNSIMVLLI. Residues 50 to 57 are Cytoplasmic-facing; the sequence is YLDTQLHT. Residues 58-79 form a helical membrane-spanning segment; that stretch reads PMYFLLSQLSLMDLMLICTTVP. Residues 80–100 are Extracellular-facing; the sequence is KMAFNYLSGSKSISMAGCATQ. Cysteine 97 and cysteine 189 are disulfide-bonded. Residues 101–120 form a helical membrane-spanning segment; sequence IFFYISLLGSECFLLAVMSY. Residues 121 to 139 lie on the Cytoplasmic side of the membrane; the sequence is DRYTAICHPLRYTNLMRPK. A helical transmembrane segment spans residues 140-158; the sequence is ICGLMTAFSWILGSTDGII. Over 159–195 the chain is Extracellular; sequence DAVATFSFSYCGSREIAHFCCDFPSLLILSCNDTSIF. A helical membrane pass occupies residues 196–219; that stretch reads EEVIFICCIVMLVFPVAIIITSYA. The Cytoplasmic segment spans residues 220-236; it reads RVILAVIHMGSGEGRRK. Residues 237-259 form a helical membrane-spanning segment; the sequence is AFTTCSSHLMVVGMYYGAGLFMC. Residues 260–272 are Extracellular-facing; that stretch reads IQPTSHHSPMQDK. A helical membrane pass occupies residues 273–292; the sequence is MVSVFYTIVTPMLNPLIYSL. The Cytoplasmic segment spans residues 293-311; that stretch reads RNKEVTRALMKILGKGKSG.

This sequence belongs to the G-protein coupled receptor 1 family.

It is found in the cell membrane. Its function is as follows. Odorant receptor. In Homo sapiens (Human), this protein is Olfactory receptor 2M7 (OR2M7).